A 183-amino-acid chain; its full sequence is Der GTPase-activating protein YihI (183 aa).

Residues 1-18 show a composition bias toward low complexity; it reads MNQPSKAPRAPRSSAATP. The disordered stretch occupies residues 1–114; that stretch reads MNQPSKAPRA…EEELAKLEND (114 aa). The span at 25 to 34 shows a compositional bias: basic and acidic residues; sequence RAELDQEARE. Over residues 56–65 the composition is skewed to low complexity; that stretch reads NQKNKAAAQA. Residues 92–114 show a composition bias toward basic and acidic residues; that stretch reads PKAEAKPKPRLTPEEELAKLEND.

This sequence belongs to the YihI family. In terms of assembly, interacts with Der.

Its function is as follows. A GTPase-activating protein (GAP) that modifies Der/EngA GTPase function. May play a role in ribosome biogenesis. The protein is Der GTPase-activating protein YihI of Serratia proteamaculans (strain 568).